Here is a 104-residue protein sequence, read N- to C-terminus: A-type ATP synthase subunit F (104 aa).

The protein belongs to the V-ATPase F subunit family. Has multiple subunits with at least A(3), B(3), C, D, E, F, H, I and proteolipid K(x).

The protein resides in the cell membrane. In terms of biological role, component of the A-type ATP synthase that produces ATP from ADP in the presence of a proton gradient across the membrane. This Thermoplasma volcanium (strain ATCC 51530 / DSM 4299 / JCM 9571 / NBRC 15438 / GSS1) protein is A-type ATP synthase subunit F.